Reading from the N-terminus, the 459-residue chain is Phosphoglucosamine mutase (459 aa).

The active-site Phosphoserine intermediate is the Ser106. Residues Ser106, Asp247, Asp249, and Asp251 each contribute to the Mg(2+) site. Ser106 is subject to Phosphoserine.

Belongs to the phosphohexose mutase family. Mg(2+) is required as a cofactor. Activated by phosphorylation.

The enzyme catalyses alpha-D-glucosamine 1-phosphate = D-glucosamine 6-phosphate. Its function is as follows. Catalyzes the conversion of glucosamine-6-phosphate to glucosamine-1-phosphate. The protein is Phosphoglucosamine mutase of Chlamydia muridarum (strain MoPn / Nigg).